We begin with the raw amino-acid sequence, 405 residues long: Arginine biosynthesis bifunctional protein ArgJ (405 aa).

Substrate is bound by residues Thr152, Lys178, Thr189, Glu276, Asn400, and Ser405. Residue Thr189 is the Nucleophile of the active site.

This sequence belongs to the ArgJ family. As to quaternary structure, heterotetramer of two alpha and two beta chains.

The protein localises to the cytoplasm. The catalysed reaction is N(2)-acetyl-L-ornithine + L-glutamate = N-acetyl-L-glutamate + L-ornithine. It catalyses the reaction L-glutamate + acetyl-CoA = N-acetyl-L-glutamate + CoA + H(+). Its pathway is amino-acid biosynthesis; L-arginine biosynthesis; L-ornithine and N-acetyl-L-glutamate from L-glutamate and N(2)-acetyl-L-ornithine (cyclic): step 1/1. It participates in amino-acid biosynthesis; L-arginine biosynthesis; N(2)-acetyl-L-ornithine from L-glutamate: step 1/4. Its function is as follows. Catalyzes two activities which are involved in the cyclic version of arginine biosynthesis: the synthesis of N-acetylglutamate from glutamate and acetyl-CoA as the acetyl donor, and of ornithine by transacetylation between N(2)-acetylornithine and glutamate. The chain is Arginine biosynthesis bifunctional protein ArgJ from Chromobacterium violaceum (strain ATCC 12472 / DSM 30191 / JCM 1249 / CCUG 213 / NBRC 12614 / NCIMB 9131 / NCTC 9757 / MK).